Consider the following 242-residue polypeptide: Aliphatic sulfonates import ATP-binding protein SsuB 1 (242 aa).

An ABC transporter domain is found at 11-227 (VAVRRLSRAF…RPSHPDFEDL (217 aa)). ATP is bound at residue 43-50 (GESGSGKT).

It belongs to the ABC transporter superfamily. Aliphatic sulfonates importer (TC 3.A.1.17.2) family. The complex is composed of two ATP-binding proteins (SsuB), two transmembrane proteins (SsuC) and a solute-binding protein (SsuA).

The protein resides in the cell inner membrane. The catalysed reaction is ATP + H2O + aliphatic sulfonate-[sulfonate-binding protein]Side 1 = ADP + phosphate + aliphatic sulfonateSide 2 + [sulfonate-binding protein]Side 1.. In terms of biological role, part of the ABC transporter complex SsuABC involved in aliphatic sulfonates import. Responsible for energy coupling to the transport system. The chain is Aliphatic sulfonates import ATP-binding protein SsuB 1 from Paracoccus denitrificans (strain Pd 1222).